Here is a 349-residue protein sequence, read N- to C-terminus: Glycerol-3-phosphate dehydrogenase [NAD(P)+] (349 aa).

NADPH is bound by residues Ser-31, Phe-32, Arg-52, Lys-53, and Lys-126. Lys-126, Gly-154, and Ser-156 together coordinate sn-glycerol 3-phosphate. Ala-158 provides a ligand contact to NADPH. Positions 209, 262, 272, 273, and 274 each coordinate sn-glycerol 3-phosphate. Lys-209 acts as the Proton acceptor in catalysis. Arg-273 contacts NADPH. NADPH is bound by residues Val-297 and Glu-299.

Belongs to the NAD-dependent glycerol-3-phosphate dehydrogenase family.

Its subcellular location is the cytoplasm. The enzyme catalyses sn-glycerol 3-phosphate + NAD(+) = dihydroxyacetone phosphate + NADH + H(+). The catalysed reaction is sn-glycerol 3-phosphate + NADP(+) = dihydroxyacetone phosphate + NADPH + H(+). It functions in the pathway membrane lipid metabolism; glycerophospholipid metabolism. Functionally, catalyzes the reduction of the glycolytic intermediate dihydroxyacetone phosphate (DHAP) to sn-glycerol 3-phosphate (G3P), the key precursor for phospholipid synthesis. The polypeptide is Glycerol-3-phosphate dehydrogenase [NAD(P)+] (Clostridium tetani (strain Massachusetts / E88)).